A 415-amino-acid chain; its full sequence is Heterogeneous nuclear ribonucleoprotein F (415 aa).

N-acetylmethionine is present on M1. M2 is modified (N-acetylmethionine; in Heterogeneous nuclear ribonucleoprotein F, N-terminally processed). The 80-residue stretch at 11–90 (YVVKLRGLPW…RYIEVFKSHR (80 aa)) folds into the RRM 1 domain. Residue K72 forms a Glycyl lysine isopeptide (Lys-Gly) (interchain with G-Cter in SUMO) linkage. The tract at residues 81–86 (RYIEVF) is interaction with RNA. K87 participates in a covalent cross-link: Glycyl lysine isopeptide (Lys-Gly) (interchain with G-Cter in SUMO2). A phosphoserine mark is found at S104, S107, and S161. One can recognise an RRM 2 domain in the interval 111 to 188 (GFVRLRGLPF…RYIEVFKSSQ (78 aa)). K167 participates in a covalent cross-link: Glycyl lysine isopeptide (Lys-Gly) (interchain with G-Cter in SUMO2). The interaction with RNA stretch occupies residues 179-184 (RYIEVF). A Glycyl lysine isopeptide (Lys-Gly) (interchain with G-Cter in SUMO2) cross-link involves residue K185. Phosphoserine occurs at positions 187, 193, and 195. K200 bears the N6-acetyllysine; alternate mark. K200 participates in a covalent cross-link: Glycyl lysine isopeptide (Lys-Gly) (interchain with G-Cter in SUMO2); alternate. T215 is modified (phosphothreonine). An N6-acetyllysine; alternate modification is found at K224. K224 participates in a covalent cross-link: Glycyl lysine isopeptide (Lys-Gly) (interchain with G-Cter in SUMO2); alternate. S265 carries the phosphoserine modification. The 78-residue stretch at 289–366 (HCVHMRGLPY…IELFLNSTTG (78 aa)) folds into the RRM 3 domain. Residues 355–360 (RYIELF) form an interaction with RNA region.

In terms of assembly, identified in the spliceosome C complex. Interacts with AGO1, AGO2, TBP and TXNL4/DIM1. Sumoylated.

The protein localises to the nucleus. The protein resides in the nucleoplasm. In terms of biological role, component of the heterogeneous nuclear ribonucleoprotein (hnRNP) complexes which provide the substrate for the processing events that pre-mRNAs undergo before becoming functional, translatable mRNAs in the cytoplasm. Plays a role in the regulation of alternative splicing events. Binds G-rich sequences in pre-mRNAs and keeps target RNA in an unfolded state. This is Heterogeneous nuclear ribonucleoprotein F (Hnrnpf) from Mus musculus (Mouse).